The chain runs to 426 residues: Glutamyl-tRNA reductase (426 aa).

Substrate is bound by residues 50-53, Ser-108, 113-115, and Gln-119; these read TCNR and EPQ. Catalysis depends on Cys-51, which acts as the Nucleophile. Residue 188–193 coordinates NADP(+); that stretch reads GAGEMI.

It belongs to the glutamyl-tRNA reductase family. As to quaternary structure, homodimer.

It catalyses the reaction (S)-4-amino-5-oxopentanoate + tRNA(Glu) + NADP(+) = L-glutamyl-tRNA(Glu) + NADPH + H(+). It participates in porphyrin-containing compound metabolism; protoporphyrin-IX biosynthesis; 5-aminolevulinate from L-glutamyl-tRNA(Glu): step 1/2. Catalyzes the NADPH-dependent reduction of glutamyl-tRNA(Glu) to glutamate 1-semialdehyde (GSA). In Polaromonas sp. (strain JS666 / ATCC BAA-500), this protein is Glutamyl-tRNA reductase.